We begin with the raw amino-acid sequence, 905 residues long: Protein translocase subunit SecA (905 aa).

ATP-binding positions include Q89, 107-111 (GEGKT), and D502. Residues C887, C889, C898, and H899 each coordinate Zn(2+).

This sequence belongs to the SecA family. Monomer and homodimer. Part of the essential Sec protein translocation apparatus which comprises SecA, SecYEG and auxiliary proteins SecDF-YajC and YidC. Zn(2+) serves as cofactor.

It localises to the cell inner membrane. Its subcellular location is the cytoplasm. It catalyses the reaction ATP + H2O + cellular proteinSide 1 = ADP + phosphate + cellular proteinSide 2.. Its function is as follows. Part of the Sec protein translocase complex. Interacts with the SecYEG preprotein conducting channel. Has a central role in coupling the hydrolysis of ATP to the transfer of proteins into and across the cell membrane, serving both as a receptor for the preprotein-SecB complex and as an ATP-driven molecular motor driving the stepwise translocation of polypeptide chains across the membrane. In Rhizobium leguminosarum bv. trifolii (strain WSM2304), this protein is Protein translocase subunit SecA.